A 688-amino-acid chain; its full sequence is Sodium channel and clathrin linker 1 (688 aa).

Position 2 is an N-acetylalanine (Ala2). Residues 59 to 673 (LIAEYEKHLE…SASQQLSVIT (615 aa)) are a coiled coil. Ser681 carries the phosphoserine modification.

As to quaternary structure, interacts with SCN10A and clathrin. Identified in a complex containing SCN10A, clathrin and SCLT1. Detected in small neurons in dorsal root ganglia. Detected in C-type fibers of sciatic nerve (at protein level).

The protein resides in the cytoplasm. It localises to the cytoskeleton. It is found in the microtubule organizing center. Its subcellular location is the centrosome. The protein localises to the centriole. In terms of biological role, adapter protein that links SCN10A to clathrin. Regulates SCN10A channel activity, possibly by promoting channel internalization. The protein is Sodium channel and clathrin linker 1 (Sclt1) of Rattus norvegicus (Rat).